The primary structure comprises 337 residues: Glyceraldehyde-3-phosphate dehydrogenase (337 aa).

NAD(+)-binding positions include 11–12 (RI), aspartate 33, and lysine 78. D-glyceraldehyde 3-phosphate contacts are provided by residues 149-151 (SCT), threonine 180, 209-210 (TG), and arginine 232. Residue cysteine 150 is the Nucleophile of the active site. Asparagine 314 serves as a coordination point for NAD(+).

This sequence belongs to the glyceraldehyde-3-phosphate dehydrogenase family. Homotetramer.

The protein resides in the cytoplasm. It catalyses the reaction D-glyceraldehyde 3-phosphate + phosphate + NAD(+) = (2R)-3-phospho-glyceroyl phosphate + NADH + H(+). It participates in carbohydrate degradation; glycolysis; pyruvate from D-glyceraldehyde 3-phosphate: step 1/5. In Lyophyllum shimeji (Hon-shimeji), this protein is Glyceraldehyde-3-phosphate dehydrogenase (GPD).